The chain runs to 362 residues: Neisseria adhesin A (362 aa).

An N-terminal signal peptide occupies residues 1–23 (MKHFPSKVLTTAILATFCSGALA). Residues 24 to 169 (ATSDDDVKKA…NIVKIDEKLE (146 aa)) are head domain. 2 coiled-coil regions span residues 90-146 (VTNL…LNKL) and 183-288 (NDIA…KETR). The tract at residues 170–307 (AVADTVDKHA…SGLFQPYNVG (138 aa)) is coiled stalk domain. 4 beta stranded membrane passes run 307-317 (GRFNVTAAVGG), 321-332 (ESAVAIGTGFRF), 339-345 (KAGVAVG), and 351-362 (SAAYHVGVNYEW). The tract at residues 308 to 362 (RFNVTAAVGGYKSESAVAIGTGFRFTENFAAKAGVAVGTSSGSSAAYHVGVNYEW) is translocator domain.

It belongs to the autotransporter-2 (AT-2) (TC 1.B.40) family. Forms high molecular weight oligomers in whole cell extracts that are not disrupted by boiling in SDS buffer. Homotrimer. A fragment containing the N-terminal half of the mature protein (residues 24-210, head domain plus part of the stalk) binds human integrin beta-1 (ITGB1). It was not seen to bind immobilized purified CEACAMs 1, 3, 5, 6 or 8 nor commercially prepared type I collagen, fibronectin or matrigel.

Its subcellular location is the cell surface. It is found in the cell outer membrane. Adheres to and induces bacterial uptake by human epithelial cells. Upon expression in engineered Y.enterocolitica confers an 11- to 15-fold increase in bacterial adherence and uptake by human epithelial cell lines; part of the uptake is mediated by integrin beta-1 (ITGB1) suggesting it may be a human receptor for NadA. A bacterial cell surface protein; antisera against this protein induce complement-mediated killing of this and other strains. This Neisseria meningitidis serogroup B (strain ATCC BAA-335 / MC58) protein is Neisseria adhesin A.